We begin with the raw amino-acid sequence, 201 residues long: MSSEDKKPVVDKKEEAAPKPPSSAVFSMFGGKKAEKPETKKDEEDTKEETKKEGDDAPESPDIHFEPVVHLEKVDVKTMEEDEEVLYKVRAKLFRFDADAKEWKERGTGDCKFLKNKKTNKVRILMRRDKTLKICANHIIAPEYTLKPNVGSDRSWVYACTADIAEGEAEAFTFAIRFGSKENADKFKEEFEKAQEINKKA.

Composition is skewed to basic and acidic residues over residues 1–17 (MSSEDKKPVVDKKEEAA) and 32–66 (KKAEKPETKKDEEDTKEETKKEGDDAPESPDIHFE). The disordered stretch occupies residues 1–66 (MSSEDKKPVV…APESPDIHFE (66 aa)). Ser-60 carries the phosphoserine modification. Residues 64 to 200 (HFEPVVHLEK…FEKAQEINKK (137 aa)) enclose the RanBD1 domain.

Belongs to the RANBP1 family. In terms of assembly, interacts with GSP1 and PRP20.

The protein localises to the cytoplasm. It is found in the nucleus. In terms of biological role, important for the export of protein containing nuclear export signal (NES) out of the nucleus. Stimulates the GTPase activity of GSP1 and GSP2. The sequence is that of Ran-specific GTPase-activating protein 1 (YRB1) from Saccharomyces cerevisiae (strain ATCC 204508 / S288c) (Baker's yeast).